Reading from the N-terminus, the 24-residue chain is Brevinin-1R (24 aa).

A disulfide bridge links cysteine 18 with cysteine 24.

Expressed by the skin glands.

It is found in the secreted. Functionally, antimicrobial peptide. The protein is Brevinin-1R of Pelophylax ridibundus (Marsh frog).